The sequence spans 325 residues: GMP reductase (325 aa).

C174 functions as the Thioimidate intermediate in the catalytic mechanism. 203-226 (LIADGGIRTHGDIAKSIRFGASMV) provides a ligand contact to NADP(+).

Belongs to the IMPDH/GMPR family. GuaC type 2 subfamily.

The enzyme catalyses IMP + NH4(+) + NADP(+) = GMP + NADPH + 2 H(+). Catalyzes the irreversible NADPH-dependent deamination of GMP to IMP. It functions in the conversion of nucleobase, nucleoside and nucleotide derivatives of G to A nucleotides, and in maintaining the intracellular balance of A and G nucleotides. This is GMP reductase from Staphylococcus aureus (strain NCTC 8325 / PS 47).